The chain runs to 332 residues: Alanine racemase (332 aa).

Residue Lys-33 is the Proton acceptor; specific for D-alanine of the active site. N6-(pyridoxal phosphate)lysine is present on Lys-33. Residue Arg-115 coordinates substrate. The active-site Proton acceptor; specific for L-alanine is the Tyr-245. Met-286 is a binding site for substrate.

The protein belongs to the alanine racemase family. The cofactor is pyridoxal 5'-phosphate.

The catalysed reaction is L-alanine = D-alanine. It functions in the pathway amino-acid biosynthesis; D-alanine biosynthesis; D-alanine from L-alanine: step 1/1. Catalyzes the interconversion of L-alanine and D-alanine. May also act on other amino acids. This is Alanine racemase (alr) from Nitratiruptor sp. (strain SB155-2).